The following is a 297-amino-acid chain: Homoserine kinase (297 aa).

82 to 92 (PLTRGLGSSAS) contacts ATP.

This sequence belongs to the GHMP kinase family. Homoserine kinase subfamily.

It is found in the cytoplasm. The enzyme catalyses L-homoserine + ATP = O-phospho-L-homoserine + ADP + H(+). Its pathway is amino-acid biosynthesis; L-threonine biosynthesis; L-threonine from L-aspartate: step 4/5. Its function is as follows. Catalyzes the ATP-dependent phosphorylation of L-homoserine to L-homoserine phosphate. The chain is Homoserine kinase from Bacillus cereus (strain ATCC 14579 / DSM 31 / CCUG 7414 / JCM 2152 / NBRC 15305 / NCIMB 9373 / NCTC 2599 / NRRL B-3711).